Consider the following 240-residue polypeptide: MNAEKSPVNHNVDHEEIAKFEAVASHWWDLEGEFKPLHRINPLRLGYIAERAGGLFGKKVLDVGCGGGILAESMAREGATVTGLDMGFEPLQVAKLHALESGIQVDYVQETVEEHAAKHAGQYDVVTCMEMLEHVPDPQSVVRACAQLVKPGGDVFFSTLNRNGKSWLMAVVGAEYILRMVPKGTHDVKKFIKPAELLGWVVQTSLKERHMTGLHYNPITNTFKLGPGVDVNYMLHTQNK.

Residues Arg44, Gly64, Asp85, and Met129 each contribute to the S-adenosyl-L-methionine site.

Belongs to the methyltransferase superfamily. UbiG/COQ3 family.

It carries out the reaction a 3-demethylubiquinol + S-adenosyl-L-methionine = a ubiquinol + S-adenosyl-L-homocysteine + H(+). It catalyses the reaction a 3-(all-trans-polyprenyl)benzene-1,2-diol + S-adenosyl-L-methionine = a 2-methoxy-6-(all-trans-polyprenyl)phenol + S-adenosyl-L-homocysteine + H(+). Its pathway is cofactor biosynthesis; ubiquinone biosynthesis. Functionally, O-methyltransferase that catalyzes the 2 O-methylation steps in the ubiquinone biosynthetic pathway. The protein is Ubiquinone biosynthesis O-methyltransferase of Escherichia coli O6:H1 (strain CFT073 / ATCC 700928 / UPEC).